The primary structure comprises 421 residues: UDP-N-acetylglucosamine 1-carboxyvinyltransferase (421 aa).

Phosphoenolpyruvate is bound at residue 22–23; sequence KN. Arg93 contributes to the UDP-N-acetyl-alpha-D-glucosamine binding site. Cys117 functions as the Proton donor in the catalytic mechanism. Cys117 is subject to 2-(S-cysteinyl)pyruvic acid O-phosphothioketal. Residues 122 to 126, Asp308, and Ile330 contribute to the UDP-N-acetyl-alpha-D-glucosamine site; that span reads RPVDL.

Belongs to the EPSP synthase family. MurA subfamily.

The protein localises to the cytoplasm. It catalyses the reaction phosphoenolpyruvate + UDP-N-acetyl-alpha-D-glucosamine = UDP-N-acetyl-3-O-(1-carboxyvinyl)-alpha-D-glucosamine + phosphate. The protein operates within cell wall biogenesis; peptidoglycan biosynthesis. Its function is as follows. Cell wall formation. Adds enolpyruvyl to UDP-N-acetylglucosamine. This is UDP-N-acetylglucosamine 1-carboxyvinyltransferase from Pseudomonas putida (strain GB-1).